A 215-amino-acid chain; its full sequence is Phosphatidylserine decarboxylase proenzyme (215 aa).

Ser184 serves as the catalytic Schiff-base intermediate with substrate; via pyruvic acid. Ser184 is modified (pyruvic acid (Ser); by autocatalysis).

The protein belongs to the phosphatidylserine decarboxylase family. PSD-A subfamily. As to quaternary structure, heterodimer of a large membrane-associated beta subunit and a small pyruvoyl-containing alpha subunit. Pyruvate serves as cofactor. Post-translationally, is synthesized initially as an inactive proenzyme. Formation of the active enzyme involves a self-maturation process in which the active site pyruvoyl group is generated from an internal serine residue via an autocatalytic post-translational modification. Two non-identical subunits are generated from the proenzyme in this reaction, and the pyruvate is formed at the N-terminus of the alpha chain, which is derived from the carboxyl end of the proenzyme. The post-translation cleavage follows an unusual pathway, termed non-hydrolytic serinolysis, in which the side chain hydroxyl group of the serine supplies its oxygen atom to form the C-terminus of the beta chain, while the remainder of the serine residue undergoes an oxidative deamination to produce ammonia and the pyruvoyl prosthetic group on the alpha chain.

It is found in the cell membrane. The catalysed reaction is a 1,2-diacyl-sn-glycero-3-phospho-L-serine + H(+) = a 1,2-diacyl-sn-glycero-3-phosphoethanolamine + CO2. The protein operates within phospholipid metabolism; phosphatidylethanolamine biosynthesis; phosphatidylethanolamine from CDP-diacylglycerol: step 2/2. Functionally, catalyzes the formation of phosphatidylethanolamine (PtdEtn) from phosphatidylserine (PtdSer). This chain is Phosphatidylserine decarboxylase proenzyme, found in Ralstonia nicotianae (strain ATCC BAA-1114 / GMI1000) (Ralstonia solanacearum).